Reading from the N-terminus, the 834-residue chain is Leucine--tRNA ligase (834 aa).

A 'HIGH' region motif is present at residues 40 to 50 (PYPSGNIHMGH). Residues 586–590 (KMSKS) carry the 'KMSKS' region motif. Lys589 is a binding site for ATP.

Belongs to the class-I aminoacyl-tRNA synthetase family.

It localises to the cytoplasm. It carries out the reaction tRNA(Leu) + L-leucine + ATP = L-leucyl-tRNA(Leu) + AMP + diphosphate. The chain is Leucine--tRNA ligase from Nitratidesulfovibrio vulgaris (strain DSM 19637 / Miyazaki F) (Desulfovibrio vulgaris).